A 350-amino-acid chain; its full sequence is Probable poly-beta-1,6-N-acetyl-D-glucosamine export protein (350 aa).

Transmembrane regions (helical) follow at residues 7–29 (ELVYLRAIICAIIIVTHLLTQIT), 44–66 (FYIRNIVIFGTPCFIILSQLLTT), 79–101 (TRVKYILIPYILMGLFYSYSESL), 116–138 (LLGQWYGYFIVVIMQFFILSYII), 145–167 (LFNSKILLLLSFILQQSFLYYFT), 187–204 (IIFGWIFYFFLGAYMGYN), 211–233 (FLERYLVIMIVLAVATYFVFIAL), 243–262 (SFSYSLTPYNSIMFIVILGI), 269–291 (MLFNTIQMISAFSFFIYLLHPII), and 306–328 (TMVFLAISLLFILGLCIGVGMIL).

The protein belongs to the acyltransferase 3 family.

The protein resides in the cell membrane. In terms of biological role, presumably involved in the export of the biofilm adhesin polysaccharide poly-beta-1,6-N-acetyl-D-glucosamine (PNAG, also referred to as PIA) across the cell membrane. This is Probable poly-beta-1,6-N-acetyl-D-glucosamine export protein (icaC) from Staphylococcus aureus (strain MRSA252).